The chain runs to 286 residues: F-box/SPRY domain-containing protein 1 (286 aa).

Ala2 is subject to N-acetylalanine. The F-box domain maps to 33–82 (AGAGGRLPSRVLELVFSYLELSELRSCALVCKHWYRCLHGDENSEVWRSL). Positions 92 to 284 (LRTDILCNLP…VTLVYLGKPL (193 aa)) constitute a B30.2/SPRY domain.

It belongs to the FBXO45/Fsn family. As to quaternary structure, forms a complex with MYCBP2 and SKP1. Interacts with HEY1; leading to FBXO45 nuclear translocation. Interacts (via SPRY domain) with CDH2.

It is found in the secreted. Its subcellular location is the postsynaptic cell membrane. It localises to the presynaptic cell membrane. The protein localises to the nucleus. Its pathway is protein modification; protein ubiquitination. Functionally, component of E3 ubiquitin ligase complex consisting of FBXO45, MYCBP2 and SKP1. Functions in substrate recognition but also plays an important role in assembly of the complex. Required for normal neuromuscular synaptogenesis, axon pathfinding and neuronal migration. Regulates neuron migration during brain development through interaction with N-cadherin/CDH2 after secretion via a non-classical mechanism. Plays a role in the regulation of neurotransmission at mature neurons. May control synaptic activity by controlling UNC13A via ubiquitin dependent pathway. Specifically recognizes TP73, promoting its ubiquitination and degradation. Polyubiquitinates NMNAT2, an adenylyltransferase that acts as an axon maintenance factor, and regulates its stability and degradation by the proteasome. Also acts by ubiquitinating FBXW7 during prolonged mitotic arrest and promotes FBXW7 proteasomal degradation. Induces subsequently an increase in mitotic slippage and prevents mitotic cell death. In response to influenza infection, mediates interferon-lambda receptor IFNLR1 polyubiquitination and degradation through the ubiquitin-proteasome system by docking with its intracellular receptor domain. This Homo sapiens (Human) protein is F-box/SPRY domain-containing protein 1 (FBXO45).